Reading from the N-terminus, the 351-residue chain is UDP-N-acetylglucosamine--N-acetylmuramyl-(pentapeptide) pyrophosphoryl-undecaprenol N-acetylglucosamine transferase (351 aa).

UDP-N-acetyl-alpha-D-glucosamine is bound by residues 13–15, N125, R161, S189, I241, 260–265, and Q285; these read TGG and ALTVCE.

It belongs to the glycosyltransferase 28 family. MurG subfamily.

It localises to the cell inner membrane. The catalysed reaction is di-trans,octa-cis-undecaprenyl diphospho-N-acetyl-alpha-D-muramoyl-L-alanyl-D-glutamyl-meso-2,6-diaminopimeloyl-D-alanyl-D-alanine + UDP-N-acetyl-alpha-D-glucosamine = di-trans,octa-cis-undecaprenyl diphospho-[N-acetyl-alpha-D-glucosaminyl-(1-&gt;4)]-N-acetyl-alpha-D-muramoyl-L-alanyl-D-glutamyl-meso-2,6-diaminopimeloyl-D-alanyl-D-alanine + UDP + H(+). It functions in the pathway cell wall biogenesis; peptidoglycan biosynthesis. Cell wall formation. Catalyzes the transfer of a GlcNAc subunit on undecaprenyl-pyrophosphoryl-MurNAc-pentapeptide (lipid intermediate I) to form undecaprenyl-pyrophosphoryl-MurNAc-(pentapeptide)GlcNAc (lipid intermediate II). This is UDP-N-acetylglucosamine--N-acetylmuramyl-(pentapeptide) pyrophosphoryl-undecaprenol N-acetylglucosamine transferase from Haemophilus influenzae (strain PittGG).